The following is a 362-amino-acid chain: tRNA N6-adenosine threonylcarbamoyltransferase (362 aa).

The Fe cation site is built by H116 and H120. Residues 138–142, D171, G184, and N284 each bind substrate; that span reads LVSGG. D312 is a Fe cation binding site.

The protein belongs to the KAE1 / TsaD family. The cofactor is Fe(2+).

It localises to the cytoplasm. The enzyme catalyses L-threonylcarbamoyladenylate + adenosine(37) in tRNA = N(6)-L-threonylcarbamoyladenosine(37) in tRNA + AMP + H(+). In terms of biological role, required for the formation of a threonylcarbamoyl group on adenosine at position 37 (t(6)A37) in tRNAs that read codons beginning with adenine. Is involved in the transfer of the threonylcarbamoyl moiety of threonylcarbamoyl-AMP (TC-AMP) to the N6 group of A37, together with TsaE and TsaB. TsaD likely plays a direct catalytic role in this reaction. The chain is tRNA N6-adenosine threonylcarbamoyltransferase from Chelativorans sp. (strain BNC1).